A 421-amino-acid chain; its full sequence is Lipid II:glycine glycyltransferase (421 aa).

The protein belongs to the FemABX family. As to quaternary structure, monomer.

It is found in the cytoplasm. The catalysed reaction is beta-D-GlcNAc-(1-&gt;4)-Mur2Ac(oyl-L-Ala-D-isoglutaminyl-L-Lys-D-Ala-D-Ala)-di-trans,octa-cis-undecaprenyl diphosphate + glycyl-tRNA(Gly) = beta-D-GlcNAc-(1-&gt;4)-Mur2Ac(oyl-L-Ala-D-isoglutaminyl-L-Lys-(N(6)-Gly)-D-Ala-D-Ala)-di-trans,octa-cis-undecaprenyl diphosphate + tRNA(Gly) + H(+). Its function is as follows. Catalyzes the incorporation of the first glycine of the pentaglycine interpeptide bridge, which is characteristic of the S.aureus peptidoglycan. This glycine is added to the epsilon-amino group of the L-lysine of the membrane-bound lipid II intermediate (GlcNAc-(beta-1,4)-N-acetylmuramic acid(-L-Ala-D-iGln-L-Lys-D-Ala-D-Ala)-pyrophosphoryl-undecaprenol), using glycyl-tRNA(Gly) as donor, in a ribosome-independent mechanism. Involved in methicillin resistance. This Staphylococcus aureus (strain COL) protein is Lipid II:glycine glycyltransferase (femX).